A 542-amino-acid polypeptide reads, in one-letter code: Ribulokinase 2 (542 aa).

The protein belongs to the ribulokinase family.

The enzyme catalyses D-ribulose + ATP = D-ribulose 5-phosphate + ADP + H(+). The catalysed reaction is L-ribulose + ATP = L-ribulose 5-phosphate + ADP + H(+). It participates in carbohydrate degradation; L-arabinose degradation via L-ribulose; D-xylulose 5-phosphate from L-arabinose (bacterial route): step 2/3. The chain is Ribulokinase 2 from Staphylococcus saprophyticus subsp. saprophyticus (strain ATCC 15305 / DSM 20229 / NCIMB 8711 / NCTC 7292 / S-41).